The following is a 436-amino-acid chain: MKPLVALVGRPNVGKSTLFNRITHQKSAIVDSTPGVTRDRHIMPAEWIGKEFLVMDTGGYCHDSDGISKAMLEQTLTAIGEADVIIFLVDVRSGLTYLDLDMAKLLKRDFNDKPVYFAVNKVESPQLAYEGESFRKTGFTEPWFISARDGSGVADLLDAVVDSFEEKSGQEEEDDSIRLAIIGRPNVGKSSFVNALLGTNRNIVSNKPGTTRDAIDTRFKRNGREIVLIDTAGLRKRARIDAGIEFYSSLRTERAIERCDVALVLIDAEQGLEKQDMKIIEMAAERKKGVLLLVNKWDLIEKDSKTSKLYSDRMYDDMGNLGWIPIQFISAMTKKNLYRAIDAALDIQEQRSQQITTSDLNRFLQDTLLQAPPSSKSGKELKIKYMTQIRAPWPVFAFFCNDPKLLQNNYKRFLEKRIRQNYNLSGVPFSLRFMQK.

EngA-type G domains lie at 3–168 and 177–352; these read PLVA…EEKS and IRLA…EQRS. GTP contacts are provided by residues 9–16, 56–60, 120–123, 183–190, 230–234, and 295–298; these read GRPNVGKS, DTGGY, NKVE, DTAGL, and NKWD. The 84-residue stretch at 353–436 folds into the KH-like domain; it reads QQITTSDLNR…VPFSLRFMQK (84 aa).

It belongs to the TRAFAC class TrmE-Era-EngA-EngB-Septin-like GTPase superfamily. EngA (Der) GTPase family. In terms of assembly, associates with the 50S ribosomal subunit.

Its function is as follows. GTPase that plays an essential role in the late steps of ribosome biogenesis. The polypeptide is GTPase Der (Prosthecochloris aestuarii (strain DSM 271 / SK 413)).